A 152-amino-acid chain; its full sequence is Regulatory protein RecX (152 aa).

It belongs to the RecX family.

The protein resides in the cytoplasm. Functionally, modulates RecA activity. This is Regulatory protein RecX from Chromobacterium violaceum (strain ATCC 12472 / DSM 30191 / JCM 1249 / CCUG 213 / NBRC 12614 / NCIMB 9131 / NCTC 9757 / MK).